The chain runs to 117 residues: Histone H1-like protein HC1 (117 aa).

A disordered region spans residues 57-117 (EKSGLMTRKP…KSSKSRYLRK (61 aa)). Positions 66 to 81 (PATKAKKAAATKKAAP) are enriched in basic residues. Over residues 82-94 (KPKIQAKAAPKAK) the composition is skewed to low complexity. A compositionally biased stretch (basic residues) spans 95–117 (ATTKKTPAKAKAKKSSKSRYLRK).

This sequence belongs to the histone H1/H5 family. HCT subfamily.

In terms of biological role, might have a role analogous to that of eukaryotic histone proteins. The chain is Histone H1-like protein HC1 (hctA) from Chlamydia psittaci (Chlamydophila psittaci).